Consider the following 158-residue polypeptide: Transcription elongation factor GreA (158 aa).

Positions E2–H70 form a coiled coil.

It belongs to the GreA/GreB family.

In terms of biological role, necessary for efficient RNA polymerase transcription elongation past template-encoded arresting sites. The arresting sites in DNA have the property of trapping a certain fraction of elongating RNA polymerases that pass through, resulting in locked ternary complexes. Cleavage of the nascent transcript by cleavage factors such as GreA or GreB allows the resumption of elongation from the new 3'terminus. GreA releases sequences of 2 to 3 nucleotides. The sequence is that of Transcription elongation factor GreA from Staphylococcus epidermidis (strain ATCC 35984 / DSM 28319 / BCRC 17069 / CCUG 31568 / BM 3577 / RP62A).